The primary structure comprises 216 residues: 2',3'-cyclic-nucleotide 3'-phosphodiesterase (216 aa).

His-39 (proton donor/acceptor) is an active-site residue. Thr-41 serves as a coordination point for substrate. The Proton donor/acceptor role is filled by His-153. Positions 155 and 158 each coordinate substrate.

It belongs to the 2H phosphoesterase superfamily. CPD1 family.

The protein localises to the golgi apparatus. It carries out the reaction a nucleoside 2',3'-cyclic phosphate + H2O = a nucleoside 2'-phosphate + H(+). Functionally, involved in the metabolism of ADP-ribose 1',2'-cyclic phosphate which is produced as a consequence of tRNA splicing. The chain is 2',3'-cyclic-nucleotide 3'-phosphodiesterase (CPD1) from Yarrowia lipolytica (strain CLIB 122 / E 150) (Yeast).